The following is a 55-amino-acid chain: Conotoxin Cal6.40 (55 aa).

Positions 1–21 (MSGSGVLLLTLLLLVPLSALA) are cleaved as a signal peptide. Intrachain disulfides connect Cys-24–Cys-36, Cys-29–Cys-41, and Cys-35–Cys-50.

Expressed by the venom duct.

Its subcellular location is the secreted. Probable neurotoxin. The protein is Conotoxin Cal6.40 of Californiconus californicus (California cone).